Reading from the N-terminus, the 327-residue chain is MTHLQAGLSPETLEKARLELNENPDTLHQDIQEVRDMVITRPDIGFLRTDDAFILRFLRARKFHHFEAFRLLAQYFEYRQQNLDMFKSFKATDPGIKQALKDGFPGGLANLDHYGRKILVLFAANWDQSRYTLVDILRAILLSLEAMIEDPELQVNGFVLIIDWSNFTFKQASKLTPNMLRLAIEGLQDSFPARFGGIHFVNQPWYIHALYTVIRPFLKEKTRKRIFLHGNNLNSLHQLIHPEILPSEFGGMLPPYDMGTWARTLLDHEYDDDSEYNVDSYNMPVKDVDKELSPKSMKRSQSVVDPTALKRMDKSEEENMQPLLALD.

Residues 96-257 (IKQALKDGFP…EFGGMLPPYD (162 aa)) enclose the CRAL-TRIO domain. The disordered stretch occupies residues 289–327 (DKELSPKSMKRSQSVVDPTALKRMDKSEEENMQPLLALD).

Forms a complex with clathrin heavy chain and gamma-adaptin.

The protein resides in the golgi apparatus. Its subcellular location is the trans-Golgi network membrane. The protein localises to the early endosome membrane. It is found in the cytoplasmic vesicle. It localises to the clathrin-coated vesicle. Its function is as follows. Required for normal morphology of late endosomes and/or lysosomes in neurons. Binds phosphatidylinositol 3,5-bisphosphate (PtdIns(3,5)P2). This is Clavesin-2 (Clvs2) from Mus musculus (Mouse).